Here is a 511-residue protein sequence, read N- to C-terminus: Synaptotagmin-6 (511 aa).

The Vesicular segment spans residues 1–59 (MSGVWGAGGPRCQAALAVLASLCRARPPPLGLDVETCQSFELQPPEQSPSAADSGTSVS). The segment at 12 to 38 (CQAALAVLASLCRARPPPLGLDVETCQ) is cysteine motif. A helical membrane pass occupies residues 60-80 (LLAVVVIVCGVALVAVFFFLF). Residues 81–511 (WKLCWMPWRN…KSFKEGTPRL (431 aa)) lie on the Cytoplasmic side of the membrane. The segment covering 93–103 (ASSPSSANPAS) has biased composition (low complexity). Disordered regions lie at residues 93 to 118 (ASSP…MADK) and 157 to 182 (TKLQ…LPRQ). A compositionally biased stretch (polar residues) spans 160 to 172 (QRQTTEPASSTRH). S217 is modified (phosphoserine). C2 domains lie at 230-351 (SCGK…SIWK) and 362-495 (DLGE…AHWH). Ca(2+) is bound by residues D261, D267, D319, F320, D321, S324, D327, D393, D399, D453, and D455. The interval 483-511 (MLAYPRKPIAHWHCLAEVKKSFKEGTPRL) is necessary for cell membrane association (isoform 2).

The protein belongs to the synaptotagmin family. Isoform 1: Homodimer; disulfide-linked via the cysteine motif. Isoform 1: Can also form heterodimers with SYT3, SYT7, SYT9 and SYT10. Isoform 1: Interacts with STX1A, STX1B and STX2; the interaction is Ca(2+)-dependent. Isoform 2: Is not able to form homodimer and heterodimers. The cofactor is Ca(2+).

The protein resides in the cytoplasmic vesicle. Its subcellular location is the secretory vesicle. It is found in the synaptic vesicle membrane. It localises to the membrane. The protein localises to the cytoplasm. The protein resides in the cytosol. Its subcellular location is the cell membrane. Its function is as follows. May be involved in Ca(2+)-dependent exocytosis of secretory vesicles through Ca(2+) and phospholipid binding to the C2 domain or may serve as Ca(2+) sensors in the process of vesicular trafficking and exocytosis. May mediate Ca(2+)-regulation of exocytosis in acrosomal reaction in sperm. The polypeptide is Synaptotagmin-6 (Syt6) (Rattus norvegicus (Rat)).